The primary structure comprises 427 residues: 3-phosphoshikimate 1-carboxyvinyltransferase (427 aa).

3-phosphoshikimate-binding residues include K22, S23, and R27. A phosphoenolpyruvate-binding site is contributed by K22. G96 and R124 together coordinate phosphoenolpyruvate. Residues S169, S170, Q171, S197, D313, N336, and K340 each contribute to the 3-phosphoshikimate site. Q171 provides a ligand contact to phosphoenolpyruvate. D313 acts as the Proton acceptor in catalysis. Residues R344, R386, and K411 each coordinate phosphoenolpyruvate.

The protein belongs to the EPSP synthase family. In terms of assembly, monomer.

It localises to the cytoplasm. It carries out the reaction 3-phosphoshikimate + phosphoenolpyruvate = 5-O-(1-carboxyvinyl)-3-phosphoshikimate + phosphate. It participates in metabolic intermediate biosynthesis; chorismate biosynthesis; chorismate from D-erythrose 4-phosphate and phosphoenolpyruvate: step 6/7. Catalyzes the transfer of the enolpyruvyl moiety of phosphoenolpyruvate (PEP) to the 5-hydroxyl of shikimate-3-phosphate (S3P) to produce enolpyruvyl shikimate-3-phosphate and inorganic phosphate. This is 3-phosphoshikimate 1-carboxyvinyltransferase from Shigella flexneri serotype 5b (strain 8401).